The sequence spans 207 residues: Outer-membrane lipoprotein LolB (207 aa).

Positions 1-21 (MPLPDFRLIRLLPLAALVLTA) are cleaved as a signal peptide. The N-palmitoyl cysteine moiety is linked to residue cysteine 22. Cysteine 22 is lipidated: S-diacylglycerol cysteine.

It belongs to the LolB family. As to quaternary structure, monomer.

Its subcellular location is the cell outer membrane. Functionally, plays a critical role in the incorporation of lipoproteins in the outer membrane after they are released by the LolA protein. This chain is Outer-membrane lipoprotein LolB, found in Escherichia coli O7:K1 (strain IAI39 / ExPEC).